A 104-amino-acid polypeptide reads, in one-letter code: Large ribosomal subunit protein bL28 (104 aa).

The protein belongs to the bacterial ribosomal protein bL28 family.

This Wolbachia sp. subsp. Brugia malayi (strain TRS) protein is Large ribosomal subunit protein bL28.